A 175-amino-acid polypeptide reads, in one-letter code: COMPASS component SDC1 (175 aa).

The segment covering 1 to 12 (MNESENSPQHNE) has biased composition (polar residues). The disordered stretch occupies residues 1–45 (MNESENSPQHNEVTVPMVEDTSSNADIPMEQIQREDNKNYDKHDN). Basic and acidic residues predominate over residues 32–45 (IQREDNKNYDKHDN). Residues 121–162 (QTRKYLNTNVTPHLLAGMRLIAVQQPEDPLRVLGEYLIEQSN) form a DPY-30 region.

It belongs to the dpy-30 family. In terms of assembly, component of the Set1C/COMPASS complex which consists of SET1(2), BRE2(2), SPP1(2), SDC1(1), SHG1(1), SWD1(1), SWD2(1), and SWD3(1). Interacts directly with BRE2.

Its subcellular location is the nucleus. Its function is as follows. Component of the Set1C/COMPASS complex that specifically mono-, di- and trimethylates histone H3 to form H3K4me1/2/3, which subsequently plays a role in telomere length maintenance and transcription elongation regulation. COMPASS recognizes ubiquitinated H2B on one face of the nucleosome which stimulates the methylation of H3 on the opposing face. This is COMPASS component SDC1 from Saccharomyces cerevisiae (strain ATCC 204508 / S288c) (Baker's yeast).